Here is a 259-residue protein sequence, read N- to C-terminus: Ubiquinone/menaquinone biosynthesis C-methyltransferase UbiE (259 aa).

S-adenosyl-L-methionine is bound by residues Thr-82, Asp-103, 131–132, and Ser-148; that span reads NA.

The protein belongs to the class I-like SAM-binding methyltransferase superfamily. MenG/UbiE family.

It catalyses the reaction a 2-demethylmenaquinol + S-adenosyl-L-methionine = a menaquinol + S-adenosyl-L-homocysteine + H(+). It carries out the reaction a 2-methoxy-6-(all-trans-polyprenyl)benzene-1,4-diol + S-adenosyl-L-methionine = a 5-methoxy-2-methyl-3-(all-trans-polyprenyl)benzene-1,4-diol + S-adenosyl-L-homocysteine + H(+). Its pathway is quinol/quinone metabolism; menaquinone biosynthesis; menaquinol from 1,4-dihydroxy-2-naphthoate: step 2/2. It functions in the pathway cofactor biosynthesis; ubiquinone biosynthesis. Functionally, methyltransferase required for the conversion of demethylmenaquinol (DMKH2) to menaquinol (MKH2) and the conversion of 2-polyprenyl-6-methoxy-1,4-benzoquinol (DDMQH2) to 2-polyprenyl-3-methyl-6-methoxy-1,4-benzoquinol (DMQH2). The sequence is that of Ubiquinone/menaquinone biosynthesis C-methyltransferase UbiE from Vibrio campbellii (strain ATCC BAA-1116).